We begin with the raw amino-acid sequence, 384 residues long: Putative glutamate--cysteine ligase 2-2 (384 aa).

It belongs to the glutamate--cysteine ligase type 2 family. YbdK subfamily.

The enzyme catalyses L-cysteine + L-glutamate + ATP = gamma-L-glutamyl-L-cysteine + ADP + phosphate + H(+). ATP-dependent carboxylate-amine ligase which exhibits weak glutamate--cysteine ligase activity. The sequence is that of Putative glutamate--cysteine ligase 2-2 from Rubrobacter xylanophilus (strain DSM 9941 / JCM 11954 / NBRC 16129 / PRD-1).